The primary structure comprises 672 residues: Protein seu-1 (672 aa).

Disordered stretches follow at residues 1–463 and 576–672; these read MSSI…AGTE and LAPP…LKHL. A compositionally biased stretch (basic and acidic residues) spans 8-20; it reads NDNRRPTFRDHRT. Residues 25-34 are compositionally biased toward gly residues; the sequence is GRGGSGGGGR. Basic and acidic residues predominate over residues 62–85; the sequence is RSQDHRQRSPEVRRHRSPEKESKD. Over residues 87 to 105 the composition is skewed to low complexity; sequence VVTSTGSSRGATSASVTSS. Composition is skewed to basic and acidic residues over residues 107–138, 189–226, 234–268, and 289–306; these read RRHE…DADR, VSRH…KSNG, RRRE…KVED, and EQAK…ESHQ. Low complexity predominate over residues 307-317; it reads SAHSAAVSNAS. Residues 322–343 are compositionally biased toward acidic residues; sequence SEEELDYEEDDIDVDLDGDIDV. 6 stretches are compositionally biased toward basic and acidic residues: residues 366–375, 382–396, 410–424, 436–447, 607–626, and 636–659; these read NDVKDETMEE, PEKK…DDKD, RRED…SDHH, RATDHKESRRSE, SFGD…RHMD, and DHRV…ERGF.

As to expression, highly expressed in intestinal cells, lateral hypodermal (seam) cells, Pn.p ventral hypodermal cells, and spermatheca. Expressed at low levels in the ventral nerve cord.

It is found in the nucleus. Functionally, together with unc-5, involved in touch neuron axon guidance. During gonad morphogenesis, plays a role in the unc-5-/unc-6-mediated migration of distal tip cells along the body. The chain is Protein seu-1 from Caenorhabditis elegans.